Here is a 152-residue protein sequence, read N- to C-terminus: SsrA-binding protein (152 aa).

The protein belongs to the SmpB family.

Its subcellular location is the cytoplasm. Required for rescue of stalled ribosomes mediated by trans-translation. Binds to transfer-messenger RNA (tmRNA), required for stable association of tmRNA with ribosomes. tmRNA and SmpB together mimic tRNA shape, replacing the anticodon stem-loop with SmpB. tmRNA is encoded by the ssrA gene; the 2 termini fold to resemble tRNA(Ala) and it encodes a 'tag peptide', a short internal open reading frame. During trans-translation Ala-aminoacylated tmRNA acts like a tRNA, entering the A-site of stalled ribosomes, displacing the stalled mRNA. The ribosome then switches to translate the ORF on the tmRNA; the nascent peptide is terminated with the 'tag peptide' encoded by the tmRNA and targeted for degradation. The ribosome is freed to recommence translation, which seems to be the essential function of trans-translation. The polypeptide is SsrA-binding protein (Rickettsia canadensis (strain McKiel)).